The chain runs to 294 residues: Acetyl-coenzyme A carboxylase carboxyl transferase subunit beta (294 aa).

The CoA carboxyltransferase N-terminal domain occupies Leu-29–Ala-294. Residues Cys-33, Cys-36, Cys-52, and Cys-55 each coordinate Zn(2+). The C4-type zinc finger occupies Cys-33 to Cys-55.

It belongs to the AccD/PCCB family. In terms of assembly, acetyl-CoA carboxylase is a heterohexamer composed of biotin carboxyl carrier protein (AccB), biotin carboxylase (AccC) and two subunits each of ACCase subunit alpha (AccA) and ACCase subunit beta (AccD). Zn(2+) serves as cofactor.

It is found in the cytoplasm. The catalysed reaction is N(6)-carboxybiotinyl-L-lysyl-[protein] + acetyl-CoA = N(6)-biotinyl-L-lysyl-[protein] + malonyl-CoA. It participates in lipid metabolism; malonyl-CoA biosynthesis; malonyl-CoA from acetyl-CoA: step 1/1. Functionally, component of the acetyl coenzyme A carboxylase (ACC) complex. Biotin carboxylase (BC) catalyzes the carboxylation of biotin on its carrier protein (BCCP) and then the CO(2) group is transferred by the transcarboxylase to acetyl-CoA to form malonyl-CoA. The polypeptide is Acetyl-coenzyme A carboxylase carboxyl transferase subunit beta (Prochlorococcus marinus (strain NATL1A)).